We begin with the raw amino-acid sequence, 1122 residues long: DNA polymerase (1122 aa).

The protein belongs to the DNA polymerase type-B family. Heterodimer with the terminal protein; this heterodimer binds to bp 9 to 18 of the genome. Forms a complex with viral pTP, DBP and hosts NFIA and POU2F1/OCT1 for initiation of replication.

Its subcellular location is the host nucleus. The enzyme catalyses DNA(n) + a 2'-deoxyribonucleoside 5'-triphosphate = DNA(n+1) + diphosphate. Functionally, eukaryotic-type DNA polymerase involved in viral genomic replication. DNA synthesis is protein primed, and acts in a strand displacement replication. Assembles in complex with viral pTP, DBP, host NFIA and host POU2F1/OCT1 on viral origin of replication. The polymerase covalently transfers dCMP onto pTP, thereby initiating complementary strand synthesis. This Human adenovirus B serotype 7 (HAdV-7) protein is DNA polymerase.